A 504-amino-acid chain; its full sequence is MDDDLDQFFHDDAEQNADFSDDGSEDEAPDNVDVNYELEREEPKSKSVAEFTKFLQECEYPDDIIKYFKTIKFFEKDAKTGDIVSTKSLKFTVTGFIQYLFGTKRIQRPVLRGIAKIFGRYDIFHLISPELVKSITHLKETRTTAWFNLFNFLSFVPHPTDRVTKPLFRQFCVRTPFNDKSMKKRKLTWISTDYDNVWMAVMNGKISDKLTLKLIPYITQNVISKLKAPFKSADFFFKMFDKTDYHGILSLGAIFRLISEHNFEYPKFYDKVYSLTNPSLLYMSQKESILTLLDSFLSSTHLPTYITASFLKRLSRCLLLAPIDAQEPILGLIRNLVIRHPNCSELVHREVPQTLYDDPFDNDETDLHKTRALESSLWEMKLLQCHWNQSVRKRAHFVDKSIQKIESYVRFRCTDELFSVNMAKSFGGEDGEAEKYRKLQDGDEDEEGTGKPEPKKARRKGFGGKFAPKHEEKVTRAVGVNSEAPKGILDRQVPIIDVPTLWKI.

The segment at 431–483 (GEAEKYRKLQDGDEDEEGTGKPEPKKARRKGFGGKFAPKHEEKVTRAVGVNSE) is disordered.

It belongs to the CBF/MAK21 family.

This is an uncharacterized protein from Caenorhabditis elegans.